Consider the following 122-residue polypeptide: Acidic phospholipase A2 (122 aa).

Disulfide bonds link Cys-26-Cys-115, Cys-28-Cys-44, Cys-43-Cys-95, Cys-49-Cys-122, Cys-50-Cys-88, Cys-57-Cys-81, and Cys-75-Cys-86. Ca(2+)-binding residues include Tyr-27, Gly-29, and Gly-31. His-47 is an active-site residue. Asp-48 provides a ligand contact to Ca(2+). Residue Asp-89 is part of the active site.

Ca(2+) serves as cofactor. As to expression, expressed by the venom gland.

The protein localises to the secreted. It catalyses the reaction a 1,2-diacyl-sn-glycero-3-phosphocholine + H2O = a 1-acyl-sn-glycero-3-phosphocholine + a fatty acid + H(+). PLA2 catalyzes the calcium-dependent hydrolysis of the 2-acyl groups in 3-sn-phosphoglycerides. The protein is Acidic phospholipase A2 of Lachesis stenophrys (Central American bushmaster).